The following is a 319-amino-acid chain: Dehydrogenase/reductase SDR family member 9 (319 aa).

Positions 1-20 are cleaved as a signal peptide; the sequence is MLFWLLALLFLCAFLWNYKG. Residues 34 to 58 and Asp-83 each bind NAD(+); that span reads ITGC…RVIA. Ser-164 contacts substrate. The active-site Proton acceptor is Tyr-176. Position 180 (Lys-180) interacts with NAD(+).

The protein belongs to the short-chain dehydrogenases/reductases (SDR) family. Homotetramer.

It localises to the microsome membrane. Its subcellular location is the endoplasmic reticulum membrane. It carries out the reaction 3beta-hydroxy-5alpha-pregnane-20-one + NAD(+) = 5alpha-pregnane-3,20-dione + NADH + H(+). The enzyme catalyses 17beta-hydroxy-5alpha-androstan-3-one + NAD(+) = 5alpha-androstan-3,17-dione + NADH + H(+). The catalysed reaction is androsterone + NAD(+) = 5alpha-androstan-3,17-dione + NADH + H(+). It catalyses the reaction 5alpha-androstane-3alpha,17beta-diol + NAD(+) = 17beta-hydroxy-5alpha-androstan-3-one + NADH + H(+). It carries out the reaction all-trans-retinol + NAD(+) = all-trans-retinal + NADH + H(+). The enzyme catalyses 3alpha-hydroxy-5alpha-pregnan-20-one + NAD(+) = 5alpha-pregnane-3,20-dione + NADH + H(+). Its function is as follows. 3-alpha-hydroxysteroid dehydrogenase that converts 3-alpha-tetrahydroprogesterone (allopregnanolone) to dihydroxyprogesterone and 3-alpha-androstanediol to dihydroxyprogesterone. Also plays a role in the biosynthesis of retinoic acid. Can utilize both NADH and NADPH. This Mus musculus (Mouse) protein is Dehydrogenase/reductase SDR family member 9 (Dhrs9).